The sequence spans 330 residues: MGIGIIIASHGKFAEGIHQSGSMIFGEQEKVQVVTFMPNEGPDDLYGHFNNAIQQFDADDEILVLADLWSGSPFNQASRVAGENPDRKMAIITGLNLPMLIQAYTERLMDAGAGIEQVAANIIKESKDGIKALPEDLNPVEETAATEKVVNALQGAIPAGTVIGDGKLKINLARVDTRLLHGQVATAWTPASKADRIIVASDEVAQDDLRKQLIKQAAPGGVKANVVPISKLIEASKDPRFGNTHALILFQTPQDALRAVEGGVEINELNVGSMAHSTGKTMVNNVLSMDKEDVATFEKLRDLSVTFDVRKVPNDSKKNLFELIQKANIK.

Residues 2–130 (GIGIIIASHG…NIIKESKDGI (129 aa)) enclose the PTS EIIA type-4 domain. The active-site Tele-phosphohistidine intermediate; for EIIA activity is His-10. His-10 bears the Phosphohistidine; by HPr mark. Positions 143 to 161 (TAATEKVVNALQGAIPAGT) are hinge. A PTS EIIB type-4 domain is found at 166–330 (GKLKINLARV…FELIQKANIK (165 aa)). His-181 serves as the catalytic Pros-phosphohistidine intermediate; for EIIB activity. His-181 is modified (phosphohistidine; by EIIA).

As to quaternary structure, homodimer.

Its subcellular location is the cytoplasm. It localises to the cell membrane. It carries out the reaction D-mannose(out) + N(pros)-phospho-L-histidyl-[protein] = D-mannose 6-phosphate(in) + L-histidyl-[protein]. Functionally, the phosphoenolpyruvate-dependent sugar phosphotransferase system (sugar PTS), a major carbohydrate active transport system, catalyzes the phosphorylation of incoming sugar substrates concomitantly with their translocation across the cell membrane. The enzyme II ManXYZ PTS system is involved in mannose transport. The polypeptide is PTS system mannose-specific EIIAB component (Streptococcus pyogenes serotype M6 (strain ATCC BAA-946 / MGAS10394)).